The following is a 113-amino-acid chain: MSYKKLKRNKDQRKALLKNLTTAFLRDEKIETTEAKAKEVSRLAEKMITLAKKNTLASRRQALSYLTDEDVVTKLFENIGPKFQERQGGYTRVLKKGPRQGDGAPMAILELVE.

This sequence belongs to the bacterial ribosomal protein bL17 family. As to quaternary structure, part of the 50S ribosomal subunit. Contacts protein L32.

The sequence is that of Large ribosomal subunit protein bL17 from Natranaerobius thermophilus (strain ATCC BAA-1301 / DSM 18059 / JW/NM-WN-LF).